A 37-amino-acid polypeptide reads, in one-letter code: Cytochrome b6-f complex subunit 7 (37 aa).

The chain crosses the membrane as a helical span at residues 11–29; sequence AVLLMVLVLVGLAWGFLLL.

Belongs to the PetM family. The 4 large subunits of the cytochrome b6-f complex are cytochrome b6, subunit IV (17 kDa polypeptide, PetD), cytochrome f and the Rieske protein, while the 4 small subunits are PetG, PetL, PetM and PetN. The complex functions as a dimer.

It is found in the cellular thylakoid membrane. Component of the cytochrome b6-f complex, which mediates electron transfer between photosystem II (PSII) and photosystem I (PSI), cyclic electron flow around PSI, and state transitions. The polypeptide is Cytochrome b6-f complex subunit 7 (Rippkaea orientalis (strain PCC 8801 / RF-1) (Cyanothece sp. (strain PCC 8801))).